Here is an 85-residue protein sequence, read N- to C-terminus: DNA-directed RNA polymerase subunit omega (85 aa).

This sequence belongs to the RNA polymerase subunit omega family. The RNAP catalytic core consists of 2 alpha, 1 beta, 1 beta' and 1 omega subunit. When a sigma factor is associated with the core the holoenzyme is formed, which can initiate transcription.

It carries out the reaction RNA(n) + a ribonucleoside 5'-triphosphate = RNA(n+1) + diphosphate. Promotes RNA polymerase assembly. Latches the N- and C-terminal regions of the beta' subunit thereby facilitating its interaction with the beta and alpha subunits. The chain is DNA-directed RNA polymerase subunit omega from Latilactobacillus sakei subsp. sakei (strain 23K) (Lactobacillus sakei subsp. sakei).